A 409-amino-acid chain; its full sequence is MTLSSAGGSRSHRHNGGHSERDVEIRILKDKVRSLTKEKISLQKELEYYKNEITKLLSPPYIEAVVLEVIDDNRVVVKSSTGPNLIVNVAAGVDARSLKPGAIVALNNRGSTIVDVLPGRYDPLVKAMEVEERPKVFFKDVGGLEEQIREIYEAVVLPIKNPHLFRELGIDPPKGVLLHGPPGTGKTLLAKAVAGETEATFIRVVGSELVNKFIGEGARLVREIFRLAREKAPSILFIDEIDAIASKRVDIGTSGDREVQRTMLQLLAELDGFDPLDNVKVIAATNRLDLIDPAVLRPGRFDRIIEVPLPSLRGRLEILGIHTRKAKMAPDVDLEAIAKLTEGFSGADLKAVVVEAGYNAIRRGSRVITMDDMIKAVEKVKAALDKRGGGDPFIRAQQKSGDDTIATVI.

The disordered stretch occupies residues 1 to 22 (MTLSSAGGSRSHRHNGGHSERD). A coiled-coil region spans residues 23-58 (VEIRILKDKVRSLTKEKISLQKELEYYKNEITKLLS). Residues 183–188 (GTGKTL) and H322 each bind ATP.

The protein belongs to the AAA ATPase family. In terms of assembly, homohexamer. The hexameric complex has a two-ring architecture resembling a top hat that caps the 20S proteasome core at one or both ends. Upon ATP-binding, the C-terminus of PAN interacts with the alpha-rings of the proteasome core by binding to the intersubunit pockets.

Its subcellular location is the cytoplasm. Functionally, ATPase which is responsible for recognizing, binding, unfolding and translocation of substrate proteins into the archaeal 20S proteasome core particle. Is essential for opening the gate of the 20S proteasome via an interaction with its C-terminus, thereby allowing substrate entry and access to the site of proteolysis. Thus, the C-termini of the proteasomal ATPase function like a 'key in a lock' to induce gate opening and therefore regulate proteolysis. Unfolding activity requires energy from ATP hydrolysis, whereas ATP binding alone promotes ATPase-20S proteasome association which triggers gate opening, and supports translocation of unfolded substrates. This chain is Proteasome-activating nucleotidase, found in Aeropyrum pernix (strain ATCC 700893 / DSM 11879 / JCM 9820 / NBRC 100138 / K1).